A 65-amino-acid polypeptide reads, in one-letter code: Defensin Cg-Defm (65 aa).

Positions 1-22 (MKVFVLLTLAVLLMVSADMAFA) are cleaved as a signal peptide. Residues phenylalanine 24, glycine 25, and cysteine 26 each coordinate beta-D-GlcNAc-(1-&gt;4)-Mur2Ac(oyl-L-Ala-gamma-D-Glu-L-Lys-D-Ala-D-Ala)-di-trans,octa-cis-undecaprenyl diphosphate. Intrachain disulfides connect cysteine 26-cysteine 47, cysteine 33-cysteine 56, cysteine 37-cysteine 58, and cysteine 42-cysteine 61. Residues 27–30 (PGNQ) form a binds to membrane interface region. Histidine 36 lines the beta-D-GlcNAc-(1-&gt;4)-Mur2Ac(oyl-L-Ala-gamma-D-Glu-L-Lys-D-Ala-D-Ala)-di-trans,octa-cis-undecaprenyl diphosphate pocket. The segment at 48 to 54 (DAATLWL) is binds to membrane interface. Cysteine 56 provides a ligand contact to beta-D-GlcNAc-(1-&gt;4)-Mur2Ac(oyl-L-Ala-gamma-D-Glu-L-Lys-D-Ala-D-Ala)-di-trans,octa-cis-undecaprenyl diphosphate.

The protein belongs to the invertebrate defensin family. As to expression, expressed in the mantle. Low or no expression in most of the organs analyzed, including hemocytes, heart, digestive gland, and gills.

It localises to the secreted. The protein resides in the target cell membrane. Antibacterial peptide mostly active against Gram-positive bacteria (M.lysodeikticus, S.aureus, and the marine bacteria, B.stationis, and M.maritypicum). It acts by selectively inhibiting peptidoglycan biosynthesis through complex formation with the cell wall precursor lipid II (1:1 molar ratio) thus inhibiting cell wall synthesis. It does not disrupt cell membranes. Is noticeably more potent than Cg-Defh1. It shows no or limited activities against Gram-negative bacteria and filamentous fungi. The sequence is that of Defensin Cg-Defm from Magallana gigas (Pacific oyster).